Here is a 439-residue protein sequence, read N- to C-terminus: Nitroalkane oxidase (439 aa).

FAD-binding positions include 131–134, 139–141, 169–171, Arg304, 313–314, 375–379, and 400–404; these read LMHS, TAN, WPS, HQ, KAVGM, and LFDGG. Asp402 serves as the catalytic Proton acceptor.

This sequence belongs to the acyl-CoA dehydrogenase family. As to quaternary structure, homotetramer. Requires FAD as cofactor.

The enzyme catalyses a primary nitroalkane + O2 + H2O = an aldehyde + nitrite + H2O2 + H(+). The catalysed reaction is a secondary nitroalkane + O2 + H2O = a ketone + nitrite + H2O2 + H(+). Strongly inhibited by mercury chloride and KCN. Its function is as follows. Catalyzes the oxidative denitrification of neutral nitroalkanes, including 3-nitro-2-pentanol, 1-nitropropane, 2-nitropropane, nitroethane and nitrocyclohexane, and may thereby protect the organism against toxic compounds. Has no detectable acyl-CoA dehydrogenase activity. This is Nitroalkane oxidase from Fusarium oxysporum (Fusarium vascular wilt).